Reading from the N-terminus, the 404-residue chain is uncharacterized protein (404 aa).

Disordered regions lie at residues 261–307 (VSTG…SPSL) and 320–340 (KKSH…GGAD). A phosphoserine mark is found at Ser-267, Ser-276, and Ser-279. 2 positions are modified to phosphothreonine: Thr-290 and Thr-293. 5 positions are modified to phosphoserine: Ser-304, Ser-306, Ser-324, Ser-358, and Ser-362. Positions 320-336 (KKSHSANDSEEFFREDD) are enriched in basic and acidic residues.

This is an uncharacterized protein from Homo sapiens (Human).